The chain runs to 264 residues: Tryptophan synthase alpha chain (264 aa).

Residues Glu-49 and Asp-60 each act as proton acceptor in the active site.

Belongs to the TrpA family. In terms of assembly, tetramer of two alpha and two beta chains.

The catalysed reaction is (1S,2R)-1-C-(indol-3-yl)glycerol 3-phosphate + L-serine = D-glyceraldehyde 3-phosphate + L-tryptophan + H2O. It functions in the pathway amino-acid biosynthesis; L-tryptophan biosynthesis; L-tryptophan from chorismate: step 5/5. The alpha subunit is responsible for the aldol cleavage of indoleglycerol phosphate to indole and glyceraldehyde 3-phosphate. This Laribacter hongkongensis (strain HLHK9) protein is Tryptophan synthase alpha chain.